A 652-amino-acid polypeptide reads, in one-letter code: Oligopeptide-binding protein AliB (652 aa).

An N-terminal signal peptide occupies residues 1-24 (MKKSKSKYLTLAGLVLGTGVLLSA). Residue C25 is the site of N-palmitoyl cysteine attachment. C25 is lipidated: S-diacylglycerol cysteine.

It belongs to the bacterial solute-binding protein 5 family.

Its subcellular location is the cell membrane. In terms of biological role, part of the binding-protein-dependent transport system for oligopeptides; probably an oligopeptide binding protein. The polypeptide is Oligopeptide-binding protein AliB (aliB) (Streptococcus pneumoniae serotype 4 (strain ATCC BAA-334 / TIGR4)).